Here is a 473-residue protein sequence, read N- to C-terminus: Bifunctional protein HldE (473 aa).

The segment at 1–318 (MKLSMPRFDQ…RAIQREEGSE (318 aa)) is ribokinase. Residue 194-197 (NLSE) participates in ATP binding. Residue Asp-263 is part of the active site. Positions 343 to 473 (FTNGCFDILH…TAIVEKIRKN (131 aa)) are cytidylyltransferase.

The protein in the N-terminal section; belongs to the carbohydrate kinase PfkB family. This sequence in the C-terminal section; belongs to the cytidylyltransferase family. Homodimer.

It catalyses the reaction D-glycero-beta-D-manno-heptose 7-phosphate + ATP = D-glycero-beta-D-manno-heptose 1,7-bisphosphate + ADP + H(+). The enzyme catalyses D-glycero-beta-D-manno-heptose 1-phosphate + ATP + H(+) = ADP-D-glycero-beta-D-manno-heptose + diphosphate. The protein operates within nucleotide-sugar biosynthesis; ADP-L-glycero-beta-D-manno-heptose biosynthesis; ADP-L-glycero-beta-D-manno-heptose from D-glycero-beta-D-manno-heptose 7-phosphate: step 1/4. It functions in the pathway nucleotide-sugar biosynthesis; ADP-L-glycero-beta-D-manno-heptose biosynthesis; ADP-L-glycero-beta-D-manno-heptose from D-glycero-beta-D-manno-heptose 7-phosphate: step 3/4. In terms of biological role, catalyzes the phosphorylation of D-glycero-D-manno-heptose 7-phosphate at the C-1 position to selectively form D-glycero-beta-D-manno-heptose-1,7-bisphosphate. Functionally, catalyzes the ADP transfer from ATP to D-glycero-beta-D-manno-heptose 1-phosphate, yielding ADP-D-glycero-beta-D-manno-heptose. The sequence is that of Bifunctional protein HldE from Pseudomonas putida (strain GB-1).